The chain runs to 92 residues: MWPVLWTVVRTYAPYVTFPVAFVVGAVGYHLEWFIRGKDPQPVEEEKSILERREDRKLDEMLGKDHTQVVSLKDKLEFAPKAVLNRNRPEKN.

A helical membrane pass occupies residues 15-34 (YVTFPVAFVVGAVGYHLEWF).

This sequence belongs to the SMIM12 family.

The protein resides in the membrane. The sequence is that of Small integral membrane protein 12 (Smim12) from Rattus norvegicus (Rat).